The chain runs to 411 residues: Adenylosuccinate synthetase (411 aa).

GTP-binding positions include 11–17 (GDEGKGK) and 39–41 (GHT). Asp-12 (proton acceptor) is an active-site residue. 2 residues coordinate Mg(2+): Asp-12 and Gly-39. IMP is bound by residues 12–15 (DEGK), 37–40 (NAGH), Thr-121, Arg-135, Gln-215, Thr-230, and Arg-294. The Proton donor role is filled by His-40. Residue 290–296 (TTTKRPR) coordinates substrate. GTP is bound by residues Arg-296, 322-324 (KLD), and 400-402 (STS).

Belongs to the adenylosuccinate synthetase family. In terms of assembly, homodimer. Mg(2+) is required as a cofactor.

The protein localises to the cytoplasm. It catalyses the reaction IMP + L-aspartate + GTP = N(6)-(1,2-dicarboxyethyl)-AMP + GDP + phosphate + 2 H(+). Its pathway is purine metabolism; AMP biosynthesis via de novo pathway; AMP from IMP: step 1/2. Its function is as follows. Plays an important role in the de novo pathway of purine nucleotide biosynthesis. Catalyzes the first committed step in the biosynthesis of AMP from IMP. This Helicobacter pylori (strain J99 / ATCC 700824) (Campylobacter pylori J99) protein is Adenylosuccinate synthetase.